A 60-amino-acid polypeptide reads, in one-letter code: Large ribosomal subunit protein uL30 (60 aa).

This sequence belongs to the universal ribosomal protein uL30 family. As to quaternary structure, part of the 50S ribosomal subunit.

The chain is Large ribosomal subunit protein uL30 from Ralstonia pickettii (strain 12J).